A 255-amino-acid polypeptide reads, in one-letter code: Thiazole synthase (255 aa).

The active-site Schiff-base intermediate with DXP is the lysine 96. Residues glycine 157, 183-184 (AG), and 205-206 (NT) contribute to the 1-deoxy-D-xylulose 5-phosphate site.

Belongs to the ThiG family. As to quaternary structure, homotetramer. Forms heterodimers with either ThiH or ThiS.

It localises to the cytoplasm. The enzyme catalyses [ThiS sulfur-carrier protein]-C-terminal-Gly-aminoethanethioate + 2-iminoacetate + 1-deoxy-D-xylulose 5-phosphate = [ThiS sulfur-carrier protein]-C-terminal Gly-Gly + 2-[(2R,5Z)-2-carboxy-4-methylthiazol-5(2H)-ylidene]ethyl phosphate + 2 H2O + H(+). It participates in cofactor biosynthesis; thiamine diphosphate biosynthesis. In terms of biological role, catalyzes the rearrangement of 1-deoxy-D-xylulose 5-phosphate (DXP) to produce the thiazole phosphate moiety of thiamine. Sulfur is provided by the thiocarboxylate moiety of the carrier protein ThiS. In vitro, sulfur can be provided by H(2)S. In Staphylococcus haemolyticus (strain JCSC1435), this protein is Thiazole synthase.